The primary structure comprises 563 residues: Beta-catenin-like protein 1 (563 aa).

An N-acetylmethionine modification is found at Met1. The disordered stretch occupies residues 1-49 (MDVGELLSYQPNRGTKRPRDDEEEELKMRRRQAGTRERGRYREEEMTVV). The short motif at 16 to 33 (KRPRDDEEEELKMRRRQA) is the Nuclear localization signal element. Residues 34–45 (GTRERGRYREEE) are compositionally biased toward basic and acidic residues. HEAT repeat units follow at residues 79 to 129 (ESSV…VVAT) and 134 to 176 (YHLL…TLHE). Lys91 is subject to N6-acetyllysine. Positions 130-140 (MPDLYHLLVEL) match the Nuclear export signal (NES) motif. 5 ARM repeats span residues 178-228 (EEGA…MAEF), 229-273 (RPEM…LQDN), 274-323 (DENR…CLML), 325-363 (SNRE…AMIG), and 364-417 (PEGT…LLRN). Ser389 is subject to Phosphoserine. Positions 476–540 (DIEDEFYLRR…HIIKEYAENI (65 aa)) form a coiled coil. Position 545 is a phosphoserine (Ser545).

Component of the PRP19-CDC5L splicing complex composed of a core complex comprising a homotetramer of PRPF19, CDC5L, PLRG1 and BCAS2, and at least three less stably associated proteins CTNNBL1, CWC15 and HSPA8. Interacts directly with CWC15 and CDC5L in the complex. Interacts with AICDA; the interaction is important for the antibody diversification activity of AICDA. Interacts with PRPF31 (via its NLS). Interacts (via its N-terminal NLS) with KPNA1 and KPNA2.

The protein resides in the nucleus. In terms of biological role, component of the PRP19-CDC5L complex that forms an integral part of the spliceosome and is required for activating pre-mRNA splicing. Participates in AID/AICDA-mediated somatic hypermutation (SHM) and class-switch recombination (CSR), 2 processes resulting in the production of high-affinity, mutated isotype-switched antibodies. This chain is Beta-catenin-like protein 1 (CTNNBL1), found in Bos taurus (Bovine).